The chain runs to 403 residues: Phosphoglycerate kinase (403 aa).

Residues 22–24 (DLN), Arg37, 60–63 (HLGR), Arg119, and Arg156 contribute to the substrate site. ATP is bound by residues Lys206, Gly302, Glu333, and 359–362 (GGDS).

It belongs to the phosphoglycerate kinase family. In terms of assembly, monomer.

It localises to the cytoplasm. The catalysed reaction is (2R)-3-phosphoglycerate + ATP = (2R)-3-phospho-glyceroyl phosphate + ADP. It functions in the pathway carbohydrate degradation; glycolysis; pyruvate from D-glyceraldehyde 3-phosphate: step 2/5. The sequence is that of Phosphoglycerate kinase from Streptomyces griseus subsp. griseus (strain JCM 4626 / CBS 651.72 / NBRC 13350 / KCC S-0626 / ISP 5235).